Reading from the N-terminus, the 543-residue chain is Zinc finger protein tra-4 (543 aa).

The interval 1 to 38 (MDDPNQCTIKQEDSITRPRPTEAPTIQNLKQEPAIEEG) is disordered. Positions 10–20 (KQEDSITRPRP) are enriched in basic and acidic residues. 7 C2H2-type zinc fingers span residues 218–241 (VRCK…RDKH), 327–350 (PQCP…AKKH), 381–406 (YVCF…KKFH), 413–436 (FRCS…KMSH), 442–464 (FQCH…ERMH), 470–493 (FECK…RDEH), and 495–518 (YVCA…YEEH).

It belongs to the krueppel C2H2-type zinc-finger protein family. As to quaternary structure, interacts with histone deacetylase hda-1. May interact with nasp-1.

It is found in the nucleus. Its function is as follows. Probable transcription factor. Promotes normal hermaphrodite (XX) development, in concert with histone deacetylase hda-1 and nasp-1, perhaps as components of a complex. May cooperate with transcription factor tra-1 to repress male-specific genes in hermaphrodites. Synthetic multivulva (synMuv) class B protein, required to repress the induction of vulval development by let-60 Ras signaling. This Caenorhabditis elegans protein is Zinc finger protein tra-4.